Reading from the N-terminus, the 89-residue chain is Small ribosomal subunit protein uS15 (89 aa).

This sequence belongs to the universal ribosomal protein uS15 family. In terms of assembly, part of the 30S ribosomal subunit. Forms a bridge to the 50S subunit in the 70S ribosome, contacting the 23S rRNA.

In terms of biological role, one of the primary rRNA binding proteins, it binds directly to 16S rRNA where it helps nucleate assembly of the platform of the 30S subunit by binding and bridging several RNA helices of the 16S rRNA. Its function is as follows. Forms an intersubunit bridge (bridge B4) with the 23S rRNA of the 50S subunit in the ribosome. In Dechloromonas aromatica (strain RCB), this protein is Small ribosomal subunit protein uS15.